The sequence spans 517 residues: Membrane-bound lytic murein transglycosylase F (517 aa).

Residues 1–32 form the signal peptide; that stretch reads MKKFKINYLLIGIVTLLLAAALWPSIPWFGKA. A non-LT domain region spans residues 33–269; the sequence is ENRIAAIQSR…RLEEKYLGHG (237 aa). Positions 270–517 are LT domain; the sequence is GDFDYVDTRS…PNTLVQAPRR (248 aa). Glu-314 is an active-site residue.

The protein in the N-terminal section; belongs to the bacterial solute-binding protein 3 family. This sequence in the C-terminal section; belongs to the transglycosylase Slt family.

The protein localises to the cell outer membrane. The catalysed reaction is Exolytic cleavage of the (1-&gt;4)-beta-glycosidic linkage between N-acetylmuramic acid (MurNAc) and N-acetylglucosamine (GlcNAc) residues in peptidoglycan, from either the reducing or the non-reducing ends of the peptidoglycan chains, with concomitant formation of a 1,6-anhydrobond in the MurNAc residue.. Its function is as follows. Murein-degrading enzyme that degrades murein glycan strands and insoluble, high-molecular weight murein sacculi, with the concomitant formation of a 1,6-anhydromuramoyl product. Lytic transglycosylases (LTs) play an integral role in the metabolism of the peptidoglycan (PG) sacculus. Their lytic action creates space within the PG sacculus to allow for its expansion as well as for the insertion of various structures such as secretion systems and flagella. The protein is Membrane-bound lytic murein transglycosylase F of Enterobacter sp. (strain 638).